The sequence spans 927 residues: DNA polymerase alpha-binding protein (927 aa).

4 WD repeats span residues 10 to 49 (FDFG…EEPE), 134 to 173 (KIDE…PNKV), 227 to 266 (AANR…LQKT), and 273 to 313 (STKA…IHYT). A phosphoserine mark is found at serine 377, serine 379, and serine 398. 2 positions are modified to phosphothreonine: threonine 401 and threonine 411. Position 463 is a phosphoserine (serine 463). Residues 699-739 (GSDNTLLLLSKWRSPEESKWLPILDSNMEIWKMSGGKETTD) form a WD 5 repeat.

The protein resides in the nucleus. Accessory factor for DNA replication. It plays a role in accurately duplicating the genome in vivo. The protein is DNA polymerase alpha-binding protein (CTF4) of Saccharomyces cerevisiae (strain ATCC 204508 / S288c) (Baker's yeast).